We begin with the raw amino-acid sequence, 115 residues long: Pancreatic progenitor cell differentiation and proliferation factor B (115 aa).

A disordered region spans residues 21–48; it reads IGSTSSSSSCGSSEYSGEVIPHHPGLPK. A compositionally biased stretch (low complexity) spans 22-37; it reads GSTSSSSSCGSSEYSG.

The protein belongs to the PPDPF family.

Probable regulator of exocrine pancreas development. The polypeptide is Pancreatic progenitor cell differentiation and proliferation factor B (ppdpfb) (Danio rerio (Zebrafish)).